The sequence spans 322 residues: Probable L-asparaginase (322 aa).

In terms of domain architecture, Asparaginase/glutaminase spans 6 to 320 (PRLALIHTGG…EDIRRVFTQG (315 aa)). The tract at residues 13 to 37 (TGGTIASRPSPDGRGLTPQTPPALP) is disordered. Threonine 16 (O-isoaspartyl threonine intermediate) is an active-site residue. Residues serine 54 and 85–86 (TD) contribute to the substrate site.

This sequence belongs to the asparaginase 1 family.

It is found in the cytoplasm. The catalysed reaction is L-asparagine + H2O = L-aspartate + NH4(+). This Deinococcus radiodurans (strain ATCC 13939 / DSM 20539 / JCM 16871 / CCUG 27074 / LMG 4051 / NBRC 15346 / NCIMB 9279 / VKM B-1422 / R1) protein is Probable L-asparaginase (ansA).